An 88-amino-acid polypeptide reads, in one-letter code: UPF0147 protein Ta0600 (88 aa).

Belongs to the UPF0147 family.

This is UPF0147 protein Ta0600 from Thermoplasma acidophilum (strain ATCC 25905 / DSM 1728 / JCM 9062 / NBRC 15155 / AMRC-C165).